We begin with the raw amino-acid sequence, 138 residues long: ATP synthase epsilon chain (138 aa).

This sequence belongs to the ATPase epsilon chain family. In terms of assembly, F-type ATPases have 2 components, CF(1) - the catalytic core - and CF(0) - the membrane proton channel. CF(1) has five subunits: alpha(3), beta(3), gamma(1), delta(1), epsilon(1). CF(0) has three main subunits: a, b and c.

The protein localises to the cell membrane. Produces ATP from ADP in the presence of a proton gradient across the membrane. This Streptococcus gordonii (strain Challis / ATCC 35105 / BCRC 15272 / CH1 / DL1 / V288) protein is ATP synthase epsilon chain.